Here is a 784-residue protein sequence, read N- to C-terminus: ATP-dependent zinc metalloprotease FTSH 9, chloroplastic/mitochondrial (784 aa).

Composition is skewed to low complexity over residues methionine 1–proline 12, proline 24–arginine 34, and proline 42–proline 53. The N-terminal 47 residues, methionine 1–alanine 47, are a transit peptide targeting the chloroplast and mitochondrion. The tract at residues methionine 1 to alanine 71 is disordered. The span at glutamine 54–proline 69 shows a compositional bias: pro residues. Transmembrane regions (helical) follow at residues tryptophan 104–valine 124 and isoleucine 267–alanine 287. ATP is bound at residue glycine 368–threonine 375. Histidine 601 contributes to the Zn(2+) binding site. The active site involves glutamate 602. Zn(2+)-binding residues include histidine 605 and aspartate 679.

The protein in the N-terminal section; belongs to the AAA ATPase family. This sequence in the C-terminal section; belongs to the peptidase M41 family. Zn(2+) is required as a cofactor.

It localises to the mitochondrion membrane. The protein resides in the plastid. The protein localises to the chloroplast thylakoid membrane. Probable ATP-dependent zinc metallopeptidase. This chain is ATP-dependent zinc metalloprotease FTSH 9, chloroplastic/mitochondrial (FTSH9), found in Oryza sativa subsp. japonica (Rice).